A 243-amino-acid polypeptide reads, in one-letter code: Geranylgeranylglyceryl phosphate synthase (243 aa).

2 residues coordinate Mg(2+): D29 and S58. Residues 178–184 (YLEAGSG), 209–210 (GG), and 231–232 (GT) each bind sn-glycerol 1-phosphate.

The protein belongs to the GGGP/HepGP synthase family. Group II subfamily. Homodimer. Mg(2+) serves as cofactor.

The catalysed reaction is sn-glycerol 1-phosphate + (2E,6E,10E)-geranylgeranyl diphosphate = sn-3-O-(geranylgeranyl)glycerol 1-phosphate + diphosphate. In terms of biological role, prenyltransferase that catalyzes the transfer of the geranylgeranyl moiety of geranylgeranyl diphosphate (GGPP) to the C3 hydroxyl of sn-glycerol-1-phosphate (G1P). This chain is Geranylgeranylglyceryl phosphate synthase, found in Flavobacterium johnsoniae (strain ATCC 17061 / DSM 2064 / JCM 8514 / BCRC 14874 / CCUG 350202 / NBRC 14942 / NCIMB 11054 / UW101) (Cytophaga johnsonae).